The following is a 131-amino-acid chain: Transcription antitermination protein NusB (131 aa).

This sequence belongs to the NusB family.

Involved in transcription antitermination. Required for transcription of ribosomal RNA (rRNA) genes. Binds specifically to the boxA antiterminator sequence of the ribosomal RNA (rrn) operons. The protein is Transcription antitermination protein NusB of Campylobacter curvus (strain 525.92).